Here is a 411-residue protein sequence, read N- to C-terminus: Acetyl-coenzyme A carboxylase carboxyl transferase subunit beta, chloroplastic (411 aa).

Residues 32–302 (LWTRCDHCGV…KEQGRIPYGE (271 aa)) enclose the CoA carboxyltransferase N-terminal domain. Cys-36, Cys-39, Cys-55, and Cys-58 together coordinate Zn(2+). The C4-type zinc finger occupies 36–58 (CDHCGVILYIKHLKENQRVCFGC).

Belongs to the AccD/PCCB family. As to quaternary structure, acetyl-CoA carboxylase is a heterohexamer composed of biotin carboxyl carrier protein, biotin carboxylase and 2 subunits each of ACCase subunit alpha and ACCase plastid-coded subunit beta (accD). The cofactor is Zn(2+).

It localises to the plastid. The protein resides in the chloroplast stroma. The enzyme catalyses N(6)-carboxybiotinyl-L-lysyl-[protein] + acetyl-CoA = N(6)-biotinyl-L-lysyl-[protein] + malonyl-CoA. It participates in lipid metabolism; malonyl-CoA biosynthesis; malonyl-CoA from acetyl-CoA: step 1/1. Its function is as follows. Component of the acetyl coenzyme A carboxylase (ACC) complex. Biotin carboxylase (BC) catalyzes the carboxylation of biotin on its carrier protein (BCCP) and then the CO(2) group is transferred by the transcarboxylase to acetyl-CoA to form malonyl-CoA. The polypeptide is Acetyl-coenzyme A carboxylase carboxyl transferase subunit beta, chloroplastic (Chlorella vulgaris (Green alga)).